Here is a 77-residue protein sequence, read N- to C-terminus: Putative defensin-like protein 129 (77 aa).

Positions 1-25 (MTKNTALTIFMVVLVIEMVMEETQG) are cleaved as a signal peptide. Intrachain disulfides connect cysteine 28–cysteine 77, cysteine 37–cysteine 59, cysteine 42–cysteine 71, and cysteine 46–cysteine 73.

This sequence belongs to the DEFL family.

Its subcellular location is the secreted. This Arabidopsis thaliana (Mouse-ear cress) protein is Putative defensin-like protein 129 (LCR13).